The primary structure comprises 91 residues: LYR motif-containing protein 4 (91 aa).

R6 and K44 together coordinate pantetheine 4'-phosphate. K47 is modified (N6-succinyllysine).

Belongs to the complex I LYR family. In terms of assembly, homodimer. Component of the mitochondrial core iron-sulfur cluster (ISC) complex composed of NFS1, LYRM4, NDUFAB1, ISCU, FXN, and FDX2; this complex is a heterohexamer containing two copies of each monomer. Component of the cyteine desulfurase complex composed of NFS1, LYRM4 and NDUFAB1; this complex contributes to the stability and cysteine desulfurase activity of NFS1. Interacts with FXN; this interaction is nickel-dependent. Interacts with the cytoplasmic form of NFS1; the complex increases the stability of NFS1. Forms a complex with the cytoplasmic form of NFS1; this complex increases the stability and cysteine desulfurase activity of NFS1. Interacts with NFS1. Component of a complex composed of FXN, NFS1, LYRM4 and ISCU.

It localises to the mitochondrion. The protein resides in the nucleus. The protein operates within cofactor biosynthesis; iron-sulfur cluster biosynthesis. Its function is as follows. Stabilizing factor, of the core iron-sulfur cluster (ISC) assembly complex, that regulates, in association with NDUFAB1, the stability and the cysteine desulfurase activity of NFS1 and participates in the [2Fe-2S] clusters assembly on the scaffolding protein ISCU. The core iron-sulfur cluster (ISC) assembly complex is involved in the de novo synthesis of a [2Fe-2S] cluster, the first step of the mitochondrial iron-sulfur protein biogenesis. This process is initiated by the cysteine desulfurase complex (NFS1:LYRM4:NDUFAB1) that produces persulfide which is delivered on the scaffold protein ISCU in a FXN-dependent manner. Then this complex is stabilized by FDX2 which provides reducing equivalents to accomplish the [2Fe-2S] cluster assembly. Finally, the [2Fe-2S] cluster is transferred from ISCU to chaperone proteins, including HSCB, HSPA9 and GLRX5. May also participates in the iron-sulfur protein biogenesis in the cytoplasm through its interaction with the cytoplasmic form of NFS1. The polypeptide is LYR motif-containing protein 4 (Mus musculus (Mouse)).